The following is a 238-amino-acid chain: Ribosomal RNA small subunit methyltransferase I (238 aa).

Belongs to the methyltransferase superfamily. RsmI family.

Its subcellular location is the cytoplasm. It catalyses the reaction cytidine(1402) in 16S rRNA + S-adenosyl-L-methionine = 2'-O-methylcytidine(1402) in 16S rRNA + S-adenosyl-L-homocysteine + H(+). Its function is as follows. Catalyzes the 2'-O-methylation of the ribose of cytidine 1402 (C1402) in 16S rRNA. The sequence is that of Ribosomal RNA small subunit methyltransferase I from Mesomycoplasma conjunctivae (strain ATCC 25834 / NCTC 10147 / HRC/581) (Mycoplasma conjunctivae).